The primary structure comprises 66 residues: Large ribosomal subunit protein uL29 (66 aa).

Belongs to the universal ribosomal protein uL29 family.

This chain is Large ribosomal subunit protein uL29, found in Chelativorans sp. (strain BNC1).